The chain runs to 337 residues: Transaldolase (337 aa).

Lys-115 is subject to N6-acetyllysine. The active-site Schiff-base intermediate with substrate is the Lys-142. Lys-219 bears the N6-acetyllysine mark. Phosphoserine is present on residues Ser-237 and Ser-256. 3 positions are modified to N6-acetyllysine: Lys-269, Lys-286, and Lys-321.

It belongs to the transaldolase family. Type 1 subfamily. Homodimer.

The protein resides in the cytoplasm. It catalyses the reaction D-sedoheptulose 7-phosphate + D-glyceraldehyde 3-phosphate = D-erythrose 4-phosphate + beta-D-fructose 6-phosphate. It participates in carbohydrate degradation; pentose phosphate pathway; D-glyceraldehyde 3-phosphate and beta-D-fructose 6-phosphate from D-ribose 5-phosphate and D-xylulose 5-phosphate (non-oxidative stage): step 2/3. Functionally, transaldolase is important for the balance of metabolites in the pentose-phosphate pathway. The chain is Transaldolase (TALDO1) from Bos taurus (Bovine).